The following is a 74-amino-acid chain: Cytochrome c oxidase subunit 2 (74 aa).

Residues 1 to 14 (MAHPMQLGFQDAAS) are Mitochondrial intermembrane-facing. Residues 15–45 (PVMEELLHFHDHALMIVFLISTAVLYIIVVT) form a helical membrane-spanning segment. Residues 46 to 74 (VTTKLTDKYVLDAQEIEMVWTIMPAVVLI) are Mitochondrial matrix-facing.

It belongs to the cytochrome c oxidase subunit 2 family. Component of the cytochrome c oxidase (complex IV, CIV), a multisubunit enzyme composed of 14 subunits. The complex is composed of a catalytic core of 3 subunits MT-CO1, MT-CO2 and MT-CO3, encoded in the mitochondrial DNA, and 11 supernumerary subunits COX4I, COX5A, COX5B, COX6A, COX6B, COX6C, COX7A, COX7B, COX7C, COX8 and NDUFA4, which are encoded in the nuclear genome. The complex exists as a monomer or a dimer and forms supercomplexes (SCs) in the inner mitochondrial membrane with NADH-ubiquinone oxidoreductase (complex I, CI) and ubiquinol-cytochrome c oxidoreductase (cytochrome b-c1 complex, complex III, CIII), resulting in different assemblies (supercomplex SCI(1)III(2)IV(1) and megacomplex MCI(2)III(2)IV(2)). Found in a complex with TMEM177, COA6, COX18, COX20, SCO1 and SCO2. Interacts with TMEM177 in a COX20-dependent manner. Interacts with COX20. Interacts with COX16. It depends on Cu cation as a cofactor.

It localises to the mitochondrion inner membrane. It catalyses the reaction 4 Fe(II)-[cytochrome c] + O2 + 8 H(+)(in) = 4 Fe(III)-[cytochrome c] + 2 H2O + 4 H(+)(out). In terms of biological role, component of the cytochrome c oxidase, the last enzyme in the mitochondrial electron transport chain which drives oxidative phosphorylation. The respiratory chain contains 3 multisubunit complexes succinate dehydrogenase (complex II, CII), ubiquinol-cytochrome c oxidoreductase (cytochrome b-c1 complex, complex III, CIII) and cytochrome c oxidase (complex IV, CIV), that cooperate to transfer electrons derived from NADH and succinate to molecular oxygen, creating an electrochemical gradient over the inner membrane that drives transmembrane transport and the ATP synthase. Cytochrome c oxidase is the component of the respiratory chain that catalyzes the reduction of oxygen to water. Electrons originating from reduced cytochrome c in the intermembrane space (IMS) are transferred via the dinuclear copper A center (CU(A)) of subunit 2 and heme A of subunit 1 to the active site in subunit 1, a binuclear center (BNC) formed by heme A3 and copper B (CU(B)). The BNC reduces molecular oxygen to 2 water molecules using 4 electrons from cytochrome c in the IMS and 4 protons from the mitochondrial matrix. The polypeptide is Cytochrome c oxidase subunit 2 (mt-co2) (Amia calva (Bowfin)).